The following is a 1368-amino-acid chain: DNA-directed RNA polymerase subunit beta (1368 aa).

This sequence belongs to the RNA polymerase beta chain family. As to quaternary structure, the RNAP catalytic core consists of 2 alpha, 1 beta, 1 beta' and 1 omega subunit. When a sigma factor is associated with the core the holoenzyme is formed, which can initiate transcription.

It catalyses the reaction RNA(n) + a ribonucleoside 5'-triphosphate = RNA(n+1) + diphosphate. Its function is as follows. DNA-dependent RNA polymerase catalyzes the transcription of DNA into RNA using the four ribonucleoside triphosphates as substrates. The protein is DNA-directed RNA polymerase subunit beta of Syntrophotalea carbinolica (strain DSM 2380 / NBRC 103641 / GraBd1) (Pelobacter carbinolicus).